Reading from the N-terminus, the 281-residue chain is MSLSDLKPVIERAFENRDQINAQTKGEVRDAVNEALNALDSGKARVAEKFQGSWEVHQWLKMAVLLSFRLNDMSTIAGGPGENTNWWDKVPSKFEGWGEAEFRKAGFRAVPGAIVRRSAYIAPNVVLMPSFVNLGAHVDEGTMVDTWVTVGSCAQIGKNCHLSGGVGIGGVLEPLQANPVIIEDNCFIGARSEVVEGVIVGEGAVLSMGVFISASTKIIDRATGEVHIGKVPPYSVVVPGSLPGKANPDGSPAPSLYCCVIVKTVDAQTRAKTAINELLRD.

Substrate contacts are provided by arginine 108 and aspartate 145.

The protein belongs to the transferase hexapeptide repeat family. Homotrimer.

The protein resides in the cytoplasm. The enzyme catalyses (S)-2,3,4,5-tetrahydrodipicolinate + succinyl-CoA + H2O = (S)-2-succinylamino-6-oxoheptanedioate + CoA. The protein operates within amino-acid biosynthesis; L-lysine biosynthesis via DAP pathway; LL-2,6-diaminopimelate from (S)-tetrahydrodipicolinate (succinylase route): step 1/3. This chain is 2,3,4,5-tetrahydropyridine-2,6-dicarboxylate N-succinyltransferase, found in Parvibaculum lavamentivorans (strain DS-1 / DSM 13023 / NCIMB 13966).